The chain runs to 338 residues: Ketol-acid reductoisomerase (NADP(+)) (338 aa).

Positions 1-181 (MQVYYDKDCD…GGGRTGIIET (181 aa)) constitute a KARI N-terminal Rossmann domain. NADP(+) contacts are provided by residues 24 to 27 (YGSQ), Arg-47, Ser-50, Ser-52, and 82 to 85 (DEFQ). His-107 is an active-site residue. Residue Gly-133 participates in NADP(+) binding. In terms of domain architecture, KARI C-terminal knotted spans 182–327 (TFKDETETDL…EKLRAMMPWI (146 aa)). Residues Asp-190, Glu-194, Glu-226, and Glu-230 each contribute to the Mg(2+) site. Residue Ser-251 coordinates substrate.

It belongs to the ketol-acid reductoisomerase family. Mg(2+) is required as a cofactor.

The catalysed reaction is (2R)-2,3-dihydroxy-3-methylbutanoate + NADP(+) = (2S)-2-acetolactate + NADPH + H(+). The enzyme catalyses (2R,3R)-2,3-dihydroxy-3-methylpentanoate + NADP(+) = (S)-2-ethyl-2-hydroxy-3-oxobutanoate + NADPH + H(+). It participates in amino-acid biosynthesis; L-isoleucine biosynthesis; L-isoleucine from 2-oxobutanoate: step 2/4. Its pathway is amino-acid biosynthesis; L-valine biosynthesis; L-valine from pyruvate: step 2/4. In terms of biological role, involved in the biosynthesis of branched-chain amino acids (BCAA). Catalyzes an alkyl-migration followed by a ketol-acid reduction of (S)-2-acetolactate (S2AL) to yield (R)-2,3-dihydroxy-isovalerate. In the isomerase reaction, S2AL is rearranged via a Mg-dependent methyl migration to produce 3-hydroxy-3-methyl-2-ketobutyrate (HMKB). In the reductase reaction, this 2-ketoacid undergoes a metal-dependent reduction by NADPH to yield (R)-2,3-dihydroxy-isovalerate. The chain is Ketol-acid reductoisomerase (NADP(+)) from Teredinibacter turnerae (strain ATCC 39867 / T7901).